We begin with the raw amino-acid sequence, 273 residues long: Ribosomal RNA small subunit methyltransferase A (273 aa).

The S-adenosyl-L-methionine site is built by Asn18, Leu20, Gly45, Glu66, Asp91, and Asn113.

Belongs to the class I-like SAM-binding methyltransferase superfamily. rRNA adenine N(6)-methyltransferase family. RsmA subfamily.

The protein localises to the cytoplasm. The catalysed reaction is adenosine(1518)/adenosine(1519) in 16S rRNA + 4 S-adenosyl-L-methionine = N(6)-dimethyladenosine(1518)/N(6)-dimethyladenosine(1519) in 16S rRNA + 4 S-adenosyl-L-homocysteine + 4 H(+). In terms of biological role, specifically dimethylates two adjacent adenosines (A1518 and A1519) in the loop of a conserved hairpin near the 3'-end of 16S rRNA in the 30S particle. May play a critical role in biogenesis of 30S subunits. The sequence is that of Ribosomal RNA small subunit methyltransferase A from Cronobacter sakazakii (strain ATCC BAA-894) (Enterobacter sakazakii).